A 254-amino-acid chain; its full sequence is tRNA threonylcarbamoyladenosine dehydratase (254 aa).

It belongs to the HesA/MoeB/ThiF family.

Functionally, catalyzes the ATP-dependent dehydration of threonylcarbamoyladenosine at position 37 (t(6)A37) to form cyclic t(6)A37 (ct(6)A37) in tRNAs that read codons beginning with adenine. In Bacillus subtilis (strain 168), this protein is tRNA threonylcarbamoyladenosine dehydratase (tcdA).